Here is a 258-residue protein sequence, read N- to C-terminus: Clathrin light chain 3 (258 aa).

Positions 1-18 are enriched in polar residues; the sequence is MSSTLSNEESGLGDSNRS. Residues 1-96 are disordered; it reads MSSTLSNEES…PPPSAMEKEE (96 aa). Position 2 is an N-acetylserine (serine 2). Low complexity predominate over residues 34-50; the sequence is SRFQSQRFDSSFSNFDS. The span at 66 to 79 shows a compositional bias: polar residues; that stretch reads RPETQSPPSINSFD. Positions 90-152 are involved in binding clathrin heavy chain; the sequence is SAMEKEEGFA…TIENNKKLNR (63 aa). The stretch at 105-164 forms a coiled coil; the sequence is RLNALRLEEKEKEEKEMVQQILEAAEQYKAEFYSKRNVTIENNKKLNREKEKFFLENQEK. A compositionally biased stretch (basic residues) spans 224–234; it reads LKHNPPTHMKP. The segment at 224-258 is disordered; it reads LKHNPPTHMKPKLPSPSGADPNVSVSEQVTVTEKL. The span at 246–258 shows a compositional bias: polar residues; that stretch reads VSVSEQVTVTEKL.

It belongs to the clathrin light chain family. As to quaternary structure, clathrin coats are formed from molecules containing 3 heavy chains and 3 light chains.

It localises to the cytoplasmic vesicle membrane. Its subcellular location is the membrane. The protein resides in the coated pit. Clathrin is the major protein of the polyhedral coat of coated pits and vesicles. The protein is Clathrin light chain 3 of Arabidopsis thaliana (Mouse-ear cress).